A 1398-amino-acid chain; its full sequence is Pyrolysin (1398 aa).

An N-terminal signal peptide occupies residues methionine 1–alanine 26. Residues glycine 27–lysine 149 constitute a propeptide that is removed on maturation. A glycan (N-linked (GlcNAc...) asparagine) is linked at asparagine 152. Positions threonine 154–tryptophan 656 constitute a Peptidase S8 domain. Aspartate 179 (charge relay system) is an active-site residue. Asparagine 222, asparagine 228, asparagine 240, asparagine 257, asparagine 262, asparagine 298, and asparagine 327 each carry an N-linked (GlcNAc...) asparagine glycan. The Charge relay system role is filled by histidine 365. A glycan (N-linked (GlcNAc...) asparagine) is linked at asparagine 406. Catalysis depends on serine 590, which acts as the Charge relay system. Asparagine 651, asparagine 663, asparagine 739, asparagine 792, asparagine 893, asparagine 908, asparagine 917, asparagine 929, asparagine 1048, asparagine 1056, asparagine 1084, asparagine 1117, asparagine 1133, asparagine 1140, asparagine 1148, asparagine 1208, asparagine 1233, asparagine 1237, and asparagine 1332 each carry an N-linked (GlcNAc...) asparagine glycan.

It belongs to the peptidase S8 family. In terms of processing, LWM pyrolysin seems to be produced by autoproteolytic activation of HMW pyrolysin. Glycosylated.

The protein resides in the cell envelope. In terms of biological role, has endopeptidase activity toward caseins, casein fragments including alpha-S1-casein and synthetic peptides. This is Pyrolysin (pls) from Pyrococcus furiosus (strain ATCC 43587 / DSM 3638 / JCM 8422 / Vc1).